The following is a 189-amino-acid chain: Protein CURLY FLAG LEAF 1 (189 aa).

The EAR motif lies at 50–55 (TLELNS). The region spanning 57-91 (LSLPCHWEQCLDLKTGEIYYINWKNGMRVKEDPRK) is the WW domain. The segment at 90-148 (RKVMNADPDSGDSYGTVCSEEDSSYYDSEESSSESSPSSRENHKEEEEEEEEEEEEEED) is disordered. 2 stretches are compositionally biased toward acidic residues: residues 108–121 (SEEDSSYYDSEESS) and 135–148 (EEEEEEEEEEEEED).

Interacts with BHLH122/CFLAP1 and BHLH80/CFLAP2. Binds to HDG1. As to expression, mostly observed in roots, flowers and siliques. Expressed in cells differentiated from epidermal cells such as trichomes, stigmatic papillar cells and guard cells, as well as in tissues undergoing abscission and dehiscence.

Its function is as follows. Negatively regulates the cuticle development by interacting with the HD-ZIP IV transcription factor HDG1. The sequence is that of Protein CURLY FLAG LEAF 1 from Arabidopsis thaliana (Mouse-ear cress).